Here is a 188-residue protein sequence, read N- to C-terminus: MPEINFAQIEYAVRLILEAIGEDPNREGLVDTPKRVAKMYAEVFAGLQEDPKQHFQTVFSEEHEELVLVKDIPFYSMCEHHLVPFFGAAHVAYIPREGKVTGLSKLARAVEAVARRPQLQERITATIADSIVEALEPHGVMVVVEAEHMCMTMRGVKKPGSKTVTTAVRGVFETDANARAEVLSLIKA.

The Zn(2+) site is built by cysteine 78, histidine 81, and cysteine 150.

It belongs to the GTP cyclohydrolase I family. Toroid-shaped homodecamer, composed of two pentamers of five dimers.

The catalysed reaction is GTP + H2O = 7,8-dihydroneopterin 3'-triphosphate + formate + H(+). It functions in the pathway cofactor biosynthesis; 7,8-dihydroneopterin triphosphate biosynthesis; 7,8-dihydroneopterin triphosphate from GTP: step 1/1. In Geobacillus kaustophilus (strain HTA426), this protein is GTP cyclohydrolase 1.